The sequence spans 352 residues: Inner membrane protein YeeA (352 aa).

Residues 1–25 (MRADKSLSPFEIRVYRHYRIVHGTR) lie on the Cytoplasmic side of the membrane. 2 helical membrane-spanning segments follow: residues 26-46 (VALA…PEST) and 47-67 (WPLV…NVVP). Position 68 (R68) is a topological domain, cytoplasmic. A helical transmembrane segment spans residues 69–89 (AFERIGGTVLGSILGLIALQL). Residue E90 is a topological domain, periplasmic. The chain crosses the membrane as a helical span at residues 91–111 (LISLPLMLVWCAAAMFLCGWL). Topologically, residues 112–117 (ALGKKP) are cytoplasmic. A helical membrane pass occupies residues 118–138 (YQGLLIGVTLAIVVGSPTGEI). The Periplasmic segment spans residues 139–147 (DTALWRSGD). A helical transmembrane segment spans residues 148–168 (VILGSLLAMLFTGIWPQRAFI). The Cytoplasmic segment spans residues 169–352 (HWRIQLAKSL…SNLICRALRK (184 aa)).

Its subcellular location is the cell inner membrane. The chain is Inner membrane protein YeeA (yeeA) from Escherichia coli (strain K12).